The primary structure comprises 434 residues: Alpha-enolase (434 aa).

Serine 40 is a Mg(2+) binding site. The substrate site is built by histidine 158 and glutamate 167. Catalysis depends on glutamate 210, which acts as the Proton donor. Mg(2+)-binding residues include aspartate 245, glutamate 293, and aspartate 318. Substrate contacts are provided by glutamate 293 and aspartate 318. Lysine 343 functions as the Proton acceptor in the catalytic mechanism. Substrate contacts are provided by residues 370–373 (SHRS) and lysine 394.

Belongs to the enolase family. In terms of assembly, homodimer. Mg(2+) serves as cofactor.

It localises to the cytoplasm. It catalyses the reaction (2R)-2-phosphoglycerate = phosphoenolpyruvate + H2O. It participates in carbohydrate degradation; glycolysis; pyruvate from D-glyceraldehyde 3-phosphate: step 4/5. The sequence is that of Alpha-enolase (ENO1) from Gallus gallus (Chicken).